Consider the following 437-residue polypeptide: tRNA-2-methylthio-N(6)-dimethylallyladenosine synthase (437 aa).

One can recognise an MTTase N-terminal domain in the interval 1–115 (MKVYIETMGC…ISQVIHKEKA (115 aa)). Positions 10, 46, 78, 148, 152, and 155 each coordinate [4Fe-4S] cluster. Residues 134 to 367 (KKAQIRSLLN…QNRHKEILEE (234 aa)) enclose the Radical SAM core domain. Positions 370 to 436 (KLEVGKTHVV…KGRLIAAIKG (67 aa)) constitute a TRAM domain.

Belongs to the methylthiotransferase family. MiaB subfamily. As to quaternary structure, monomer. The cofactor is [4Fe-4S] cluster.

The protein resides in the cytoplasm. It catalyses the reaction N(6)-dimethylallyladenosine(37) in tRNA + (sulfur carrier)-SH + AH2 + 2 S-adenosyl-L-methionine = 2-methylsulfanyl-N(6)-dimethylallyladenosine(37) in tRNA + (sulfur carrier)-H + 5'-deoxyadenosine + L-methionine + A + S-adenosyl-L-homocysteine + 2 H(+). Its function is as follows. Catalyzes the methylthiolation of N6-(dimethylallyl)adenosine (i(6)A), leading to the formation of 2-methylthio-N6-(dimethylallyl)adenosine (ms(2)i(6)A) at position 37 in tRNAs that read codons beginning with uridine. This is tRNA-2-methylthio-N(6)-dimethylallyladenosine synthase from Helicobacter pylori (strain P12).